The following is a 282-amino-acid chain: Putative polysaccharide deacetylase YheN (282 aa).

Residues 15–35 (LAFKFASLAVLCVLLLLMVIL) form a helical membrane-spanning segment. Residues 85-271 (KTVYLTFDDG…KLKEKGYSFG (187 aa)) enclose the NodB homology domain.

It belongs to the polysaccharide deacetylase family.

The protein localises to the cell membrane. In Bacillus subtilis (strain 168), this protein is Putative polysaccharide deacetylase YheN (yheN).